The sequence spans 187 residues: UPF0398 protein LBA1157 (187 aa).

It belongs to the UPF0398 family.

This chain is UPF0398 protein LBA1157, found in Lactobacillus acidophilus (strain ATCC 700396 / NCK56 / N2 / NCFM).